A 209-amino-acid chain; its full sequence is Urease accessory protein UreE (209 aa).

Over residues 170–196 (EHHGHSHSHSHDHDHDHDHDHDHDHQH) the composition is skewed to basic and acidic residues. The segment at 170 to 209 (EHHGHSHSHSHDHDHDHDHDHDHDHQHGPSCSHGHHHGHR) is disordered.

The protein belongs to the UreE family.

It is found in the cytoplasm. Involved in urease metallocenter assembly. Binds nickel. Probably functions as a nickel donor during metallocenter assembly. This Burkholderia mallei (strain NCTC 10247) protein is Urease accessory protein UreE.